The chain runs to 835 residues: Protein P (835 aa).

Residues 1–176 are terminal protein domain (TP); the sequence is MPLSYQHFRK…FFGTPYTWEH (176 aa). The interval 177-334 is spacer; the sequence is KLQHGTQPVN…HCLHHIVKLL (158 aa). 2 disordered regions span residues 211-235 and 258-288; these read LGQK…WSRT and RHPS…PTSH. Residues 335–680 are polymerase/reverse transcriptase domain (RT); the sequence is DDWGPCQHHG…YMHLYPVARQ (346 aa). One can recognise a Reverse transcriptase domain in the interval 345–590; the sequence is HHFIRIPRTP…KALNFMGYVI (246 aa). Residues Asp-417, Asp-541, and Asp-542 each coordinate Mg(2+).

It belongs to the hepadnaviridae P protein family.

It catalyses the reaction DNA(n) + a 2'-deoxyribonucleoside 5'-triphosphate = DNA(n+1) + diphosphate. It carries out the reaction Endonucleolytic cleavage to 5'-phosphomonoester.. Activated by host HSP70 and HSP40 in vitro to be able to bind the epsilon loop of the pgRNA. Because deletion of the RNase H region renders the protein partly chaperone-independent, the chaperones may be needed indirectly to relieve occlusion of the RNA-binding site by this domain. Inhibited by several reverse-transcriptase inhibitors: Lamivudine, Adefovir and Entecavir. Its function is as follows. Multifunctional enzyme that converts the viral RNA genome into dsDNA in viral cytoplasmic capsids. This enzyme displays a DNA polymerase activity that can copy either DNA or RNA templates, and a ribonuclease H (RNase H) activity that cleaves the RNA strand of RNA-DNA heteroduplexes in a partially processive 3'- to 5'-endonucleasic mode. Neo-synthesized pregenomic RNA (pgRNA) are encapsidated together with the P protein, and reverse-transcribed inside the nucleocapsid. Initiation of reverse-transcription occurs first by binding the epsilon loop on the pgRNA genome, and is initiated by protein priming, thereby the 5'-end of (-)DNA is covalently linked to P protein. Partial (+)DNA is synthesized from the (-)DNA template and generates the relaxed circular DNA (RC-DNA) genome. After budding and infection, the RC-DNA migrates in the nucleus, and is converted into a plasmid-like covalently closed circular DNA (cccDNA). The activity of P protein does not seem to be necessary for cccDNA generation, and is presumably released from (+)DNA by host nuclear DNA repair machinery. The sequence is that of Protein P from Woolly monkey hepatitis B virus (isolate Louisville) (WMHBV).